The chain runs to 1012 residues: Structural polyprotein (1012 aa).

D30 lines the a divalent metal cation pocket. Residues 513 to 755 (ADKGYEVVAN…AGRQYHLAMA (243 aa)) enclose the Peptidase S50 domain. S652 serves as the catalytic Nucleophile. K692 is a catalytic residue. Residues 969–1012 (AMEMKHRNPRRALPKPKPKPNAPTQRPPGRLGRWIRTVSDEDLE) are disordered. Over residues 975-986 (RNPRRALPKPKP) the composition is skewed to basic residues. An interaction with VP1 protein region spans residues 1003-1012 (IRTVSDEDLE).

In terms of assembly, homotrimer. A central divalent metal stabilizes the VP2 trimer. Interacts with host ITGA4/ITGB1. Homodimer. Interacts (via C-terminus) with VP1 in the cytoplasm. Interacts with VP2. Specific enzymatic cleavages yield mature proteins. The capsid assembly seems to be regulated by polyprotein processing. The protease VP4 cleaves itself off the polyprotein, thus releasing pre-VP2 and VP3 within the infected cell. During capsid assembly, the C-terminus of pre-VP2 is further processed by VP4, giving rise to VP2, the external capsid protein and three small peptides that all stay closely associated with the capsid.

The protein resides in the virion. It localises to the host cytoplasm. Its function is as follows. Capsid protein VP2 self assembles to form an icosahedral capsid with a T=13 symmetry, about 70 nm in diameter, and consisting of 260 VP2 trimers. The capsid encapsulates the genomic dsRNA. VP2 is also involved in attachment and entry into the host cell by interacting with host ITGA4/ITGB1. The precursor of VP2 plays an important role in capsid assembly. First, pre-VP2 and VP2 oligomers assemble to form a procapsid. Then, the pre-VP2 intermediates may be processed into VP2 proteins by proteolytic cleavage mediated by VP4 to obtain the mature virion. The final capsid is composed of pentamers and hexamers but VP2 has a natural tendency to assemble into all-pentameric structures. Therefore pre-VP2 may be required to allow formation of the hexameric structures. In terms of biological role, protease VP4 is a serine protease that cleaves the polyprotein into its final products. Pre-VP2 is first partially cleaved, and may be completely processed by VP4 upon capsid maturation. Functionally, capsid protein VP3 plays a key role in virion assembly by providing a scaffold for the capsid made of VP2. May self-assemble to form a T=4-like icosahedral inner-capsid composed of at least 180 trimers. Plays a role in genomic RNA packaging by recruiting VP1 into the capsid and interacting with the dsRNA genome segments to form a ribonucleoprotein complex. Additionally, the interaction of the VP3 C-terminal tail with VP1 removes the inherent structural blockade of the polymerase active site. Thus, VP3 can also function as a transcriptional activator. Its function is as follows. Structural peptide 1 is a small peptide derived from pre-VP2 C-terminus. It destabilizes and perforates cell membranes, suggesting a role during entry. Structural peptide 2 is a small peptide derived from pVP2 C-terminus. It is not essential for the virus viability, but viral growth is affected when missing. In terms of biological role, structural peptide 3 is a small peptide derived from pVP2 C-terminus. It is not essential for the virus viability, but viral growth is affected when missing. Functionally, structural peptide 4 is a small peptide derived from pVP2 C-terminus. It is essential for the virus viability. This is Structural polyprotein from Avian infectious bursal disease virus (strain Cu-1) (IBDV).